A 474-amino-acid polypeptide reads, in one-letter code: 6-phospho-beta-galactosidase (474 aa).

D-galactose 6-phosphate contacts are provided by Gln18, His115, Asn159, Glu160, and Asn296. Glu160 functions as the Proton donor in the catalytic mechanism. Glu374 serves as the catalytic Nucleophile. 4 residues coordinate D-galactose 6-phosphate: Ser427, Trp428, Lys434, and Tyr436.

The protein belongs to the glycosyl hydrolase 1 family.

It carries out the reaction a 6-phospho-beta-D-galactoside + H2O = D-galactose 6-phosphate + an alcohol. Its pathway is carbohydrate metabolism; lactose degradation; D-galactose 6-phosphate and beta-D-glucose from lactose 6-phosphate: step 1/1. This chain is 6-phospho-beta-galactosidase, found in Clostridium acetobutylicum (strain ATCC 824 / DSM 792 / JCM 1419 / IAM 19013 / LMG 5710 / NBRC 13948 / NRRL B-527 / VKM B-1787 / 2291 / W).